The primary structure comprises 208 residues: Protein-L-isoaspartate O-methyltransferase (208 aa).

The active site involves serine 59.

This sequence belongs to the methyltransferase superfamily. L-isoaspartyl/D-aspartyl protein methyltransferase family.

Its subcellular location is the cytoplasm. The catalysed reaction is [protein]-L-isoaspartate + S-adenosyl-L-methionine = [protein]-L-isoaspartate alpha-methyl ester + S-adenosyl-L-homocysteine. Its function is as follows. Catalyzes the methyl esterification of L-isoaspartyl residues in peptides and proteins that result from spontaneous decomposition of normal L-aspartyl and L-asparaginyl residues. It plays a role in the repair and/or degradation of damaged proteins. In Proteus mirabilis (strain HI4320), this protein is Protein-L-isoaspartate O-methyltransferase.